Here is a 422-residue protein sequence, read N- to C-terminus: Tyrosine--tRNA ligase (422 aa).

Y37 contacts L-tyrosine. Positions 42 to 51 (PTEESLHIGH) match the 'HIGH' region motif. 2 residues coordinate L-tyrosine: Y175 and Q179. Residues 235–239 (KFGKT) carry the 'KMSKS' region motif. K238 is a binding site for ATP. An S4 RNA-binding domain is found at 357–414 (KDLQEALVLTSLAQSRTQAKNMIISNSISINTEKIRKNHIFHEKDKLFGKFTLLSRGK).

Belongs to the class-I aminoacyl-tRNA synthetase family. TyrS type 1 subfamily. Homodimer.

Its subcellular location is the cytoplasm. It carries out the reaction tRNA(Tyr) + L-tyrosine + ATP = L-tyrosyl-tRNA(Tyr) + AMP + diphosphate + H(+). In terms of biological role, catalyzes the attachment of tyrosine to tRNA(Tyr) in a two-step reaction: tyrosine is first activated by ATP to form Tyr-AMP and then transferred to the acceptor end of tRNA(Tyr). In Buchnera aphidicola subsp. Acyrthosiphon pisum (strain APS) (Acyrthosiphon pisum symbiotic bacterium), this protein is Tyrosine--tRNA ligase.